The primary structure comprises 159 residues: S-ribosylhomocysteine lyase 1 (159 aa).

Fe cation contacts are provided by histidine 54, histidine 58, and cysteine 124.

This sequence belongs to the LuxS family. As to quaternary structure, homodimer. Requires Fe cation as cofactor.

The enzyme catalyses S-(5-deoxy-D-ribos-5-yl)-L-homocysteine = (S)-4,5-dihydroxypentane-2,3-dione + L-homocysteine. Involved in the synthesis of autoinducer 2 (AI-2) which is secreted by bacteria and is used to communicate both the cell density and the metabolic potential of the environment. The regulation of gene expression in response to changes in cell density is called quorum sensing. Catalyzes the transformation of S-ribosylhomocysteine (RHC) to homocysteine (HC) and 4,5-dihydroxy-2,3-pentadione (DPD). This Lactobacillus delbrueckii subsp. bulgaricus (strain ATCC BAA-365 / Lb-18) protein is S-ribosylhomocysteine lyase 1.